The primary structure comprises 426 residues: Serine--tRNA ligase (426 aa).

An L-serine-binding site is contributed by 231-233 (TAE). 262 to 264 (RSE) provides a ligand contact to ATP. E285 contributes to the L-serine binding site. 349-352 (EISS) serves as a coordination point for ATP. Residue S384 participates in L-serine binding.

It belongs to the class-II aminoacyl-tRNA synthetase family. Type-1 seryl-tRNA synthetase subfamily. As to quaternary structure, homodimer. The tRNA molecule binds across the dimer.

Its subcellular location is the cytoplasm. It catalyses the reaction tRNA(Ser) + L-serine + ATP = L-seryl-tRNA(Ser) + AMP + diphosphate + H(+). It carries out the reaction tRNA(Sec) + L-serine + ATP = L-seryl-tRNA(Sec) + AMP + diphosphate + H(+). Its pathway is aminoacyl-tRNA biosynthesis; selenocysteinyl-tRNA(Sec) biosynthesis; L-seryl-tRNA(Sec) from L-serine and tRNA(Sec): step 1/1. Catalyzes the attachment of serine to tRNA(Ser). Is also able to aminoacylate tRNA(Sec) with serine, to form the misacylated tRNA L-seryl-tRNA(Sec), which will be further converted into selenocysteinyl-tRNA(Sec). In Laribacter hongkongensis (strain HLHK9), this protein is Serine--tRNA ligase.